A 201-amino-acid chain; its full sequence is Recombination protein RecR (201 aa).

The C4-type zinc-finger motif lies at 57 to 72 (CKYCANFTNKDECDIC). In terms of domain architecture, Toprim spans 80–176 (TKLMIVTTNE…QIYRIGFGIP (97 aa)).

It belongs to the RecR family.

May play a role in DNA repair. It seems to be involved in an RecBC-independent recombinational process of DNA repair. It may act with RecF and RecO. The chain is Recombination protein RecR from Ureaplasma parvum serovar 3 (strain ATCC 27815 / 27 / NCTC 11736).